Consider the following 354-residue polypeptide: S-adenosylmethionine:tRNA ribosyltransferase-isomerase (354 aa).

It belongs to the QueA family. Monomer.

The protein resides in the cytoplasm. The enzyme catalyses 7-aminomethyl-7-carbaguanosine(34) in tRNA + S-adenosyl-L-methionine = epoxyqueuosine(34) in tRNA + adenine + L-methionine + 2 H(+). The protein operates within tRNA modification; tRNA-queuosine biosynthesis. Functionally, transfers and isomerizes the ribose moiety from AdoMet to the 7-aminomethyl group of 7-deazaguanine (preQ1-tRNA) to give epoxyqueuosine (oQ-tRNA). In Dichelobacter nodosus (strain VCS1703A), this protein is S-adenosylmethionine:tRNA ribosyltransferase-isomerase.